The chain runs to 1426 residues: ABC transporter G family member 31 (1426 aa).

N-linked (GlcNAc...) asparagine glycosylation is found at Asn6 and Asn150. The 275-residue stretch at 160–434 folds into the ABC transporter 1 domain; that stretch reads LSSLRIIKPR…FESLGFRLPP (275 aa). ATP is bound at residue 193 to 200; it reads GPPGSGKS. A glycan (N-linked (GlcNAc...) asparagine) is linked at Asn219. A Phosphothreonine modification is found at Thr276. The 214-residue stretch at 512–725 folds into the ABC transmembrane type-2 1 domain; that stretch reads ENLKVCFVRE…GQRAIAVNEF (214 aa). A run of 6 helical transmembrane segments spans residues 530-550, 569-589, 618-638, 649-669, 675-695, and 760-780; these read FLYT…ATVF, CLFF…PLMI, VPYS…TVGL, MLLL…MASL, IANT…GFVI, and IGIA…TLAL. The ABC transporter 2 domain occupies 826–1078; that stretch reads MTFHNVNYYV…VLVDYFQGIN (253 aa). Residue Asn856 is glycosylated (N-linked (GlcNAc...) asparagine). An ATP-binding site is contributed by 871 to 878; that stretch reads GSSGAGKT. The region spanning 1151-1365 is the ABC transmembrane type-2 2 domain; sequence SQFLLCLWKQ…TLQGVILSQL (215 aa). The next 7 membrane-spanning stretches (helical) occupy residues 1172 to 1192, 1202 to 1222, 1258 to 1278, 1285 to 1305, 1315 to 1335, 1342 to 1362, and 1396 to 1416; these read LVRL…FWDI, LITV…SNAS, IPYI…TIGF, FVLY…YGMM, LAAV…GFLV, VWWI…GVIL, and IGVS…AFAL.

Belongs to the ABC transporter superfamily. ABCG family. PDR (TC 3.A.1.205) subfamily. In terms of tissue distribution, expressed in seedlings, stems, leaves, siliques and inflorescence. In seeds, confined to the endosperm. Highly expressed in the tapetum of anthers.

It is found in the cell membrane. The catalysed reaction is abscisate(in) + ATP + H2O = abscisate(out) + ADP + phosphate + H(+). Its function is as follows. Together with ABCG25, export abscisic acid (ABA) from the endosperm to deliver it to the embryo via ABCG30 and ABCG40-mediated import to suppress radicle extension and subsequent embryonic growth. Together with ABCG9, involved in pollen coat deposition of steryl glycosides required for pollen fitness. May be a general defense protein. This Arabidopsis thaliana (Mouse-ear cress) protein is ABC transporter G family member 31.